The following is a 124-amino-acid chain: UPF0102 protein BL0935 (124 aa).

It belongs to the UPF0102 family.

The sequence is that of UPF0102 protein BL0935 from Bifidobacterium longum (strain NCC 2705).